Here is a 114-residue protein sequence, read N- to C-terminus: Large ribosomal subunit protein bL19 (114 aa).

It belongs to the bacterial ribosomal protein bL19 family.

In terms of biological role, this protein is located at the 30S-50S ribosomal subunit interface and may play a role in the structure and function of the aminoacyl-tRNA binding site. In Thermoanaerobacter sp. (strain X514), this protein is Large ribosomal subunit protein bL19.